The sequence spans 316 residues: Phosphoribosylaminoimidazole-succinocarboxamide synthase (316 aa).

It belongs to the SAICAR synthetase family.

It catalyses the reaction 5-amino-1-(5-phospho-D-ribosyl)imidazole-4-carboxylate + L-aspartate + ATP = (2S)-2-[5-amino-1-(5-phospho-beta-D-ribosyl)imidazole-4-carboxamido]succinate + ADP + phosphate + 2 H(+). It participates in purine metabolism; IMP biosynthesis via de novo pathway; 5-amino-1-(5-phospho-D-ribosyl)imidazole-4-carboxamide from 5-amino-1-(5-phospho-D-ribosyl)imidazole-4-carboxylate: step 1/2. The chain is Phosphoribosylaminoimidazole-succinocarboxamide synthase from Flavobacterium psychrophilum (strain ATCC 49511 / DSM 21280 / CIP 103535 / JIP02/86).